Here is a 525-residue protein sequence, read N- to C-terminus: GMP synthase [glutamine-hydrolyzing] (525 aa).

The Glutamine amidotransferase type-1 domain occupies 9–207 (RILILDFGSQ…VMDICKCEKL (199 aa)). Cys-86 serves as the catalytic Nucleophile. Catalysis depends on residues His-181 and Glu-183. The 193-residue stretch at 208-400 (WTAGAIIEDA…LGLPYDMLYR (193 aa)) folds into the GMPS ATP-PPase domain. 235-241 (SGGVDSS) provides a ligand contact to ATP.

Homodimer.

The enzyme catalyses XMP + L-glutamine + ATP + H2O = GMP + L-glutamate + AMP + diphosphate + 2 H(+). The protein operates within purine metabolism; GMP biosynthesis; GMP from XMP (L-Gln route): step 1/1. Functionally, catalyzes the synthesis of GMP from XMP. This is GMP synthase [glutamine-hydrolyzing] from Alteromonas mediterranea (strain DSM 17117 / CIP 110805 / LMG 28347 / Deep ecotype).